The sequence spans 170 residues: MASFFSTLRRSLNRLLIALPVLLGLMISTPAQAAQWDAETLTVPADGDGALVTFSEQEIKTGRKVFNVSCGTCHAGGITKTNQNVGLDTETLALATPARDNVASLVDYLQDPTSYDGEYSIADLHPSMRSRDLYPAMRDLTDEDLRLMSGYILVAPKVLGVDWGGGKIYF.

The first 33 residues, 1–33 (MASFFSTLRRSLNRLLIALPVLLGLMISTPAQA), serve as a signal peptide directing secretion. Residues Cys70, Cys73, His74, and His125 each contribute to the heme c site.

This sequence belongs to the cytochrome c family. PsbV subfamily. As to quaternary structure, PSII is composed of 1 copy each of membrane proteins PsbA, PsbB, PsbC, PsbD, PsbE, PsbF, PsbH, PsbI, PsbJ, PsbK, PsbL, PsbM, PsbT, PsbX, PsbY, PsbZ, Psb30/Ycf12, peripheral proteins PsbO, CyanoQ (PsbQ), PsbU, PsbV and a large number of cofactors. It forms dimeric complexes. Heme c serves as cofactor.

The protein resides in the cellular thylakoid membrane. One of the extrinsic, lumenal subunits of photosystem II (PSII). PSII is a light-driven water plastoquinone oxidoreductase, using light energy to abstract electrons from H(2)O, generating a proton gradient subsequently used for ATP formation. The extrinsic proteins stabilize the structure of photosystem II oxygen-evolving complex (OEC), the ion environment of oxygen evolution and protect the OEC against heat-induced inactivation. Low-potential cytochrome c that plays a role in the OEC of PSII. This chain is Photosystem II extrinsic protein V, found in Synechococcus sp. (strain CC9311).